The primary structure comprises 148 residues: Hemoglobin subunit beta-2 (148 aa).

In terms of domain architecture, Globin spans 3 to 148 (EWTDAERTAI…VVSALCRQYH (146 aa)). His-64 and His-93 together coordinate heme b.

As to quaternary structure, heterotetramer of two alpha chains and two beta chains. Red blood cells.

Its function is as follows. Involved in oxygen transport from gills to the various peripheral tissues. In Danio rerio (Zebrafish), this protein is Hemoglobin subunit beta-2 (ba2).